The sequence spans 158 residues: UPF0262 protein RHOS4_22360 (158 aa).

This sequence belongs to the UPF0262 family.

This chain is UPF0262 protein RHOS4_22360, found in Cereibacter sphaeroides (strain ATCC 17023 / DSM 158 / JCM 6121 / CCUG 31486 / LMG 2827 / NBRC 12203 / NCIMB 8253 / ATH 2.4.1.) (Rhodobacter sphaeroides).